The chain runs to 396 residues: Obg-like ATPase 1 (396 aa).

One can recognise an OBG-type G domain in the interval 23-283 (LKIGIVGLPN…MSAEEKQKYL (261 aa)). 32–37 (NVGKST) is an ATP binding site. S36 and T56 together coordinate Mg(2+). L231 contributes to the ATP binding site. The Nuclear export signal motif lies at 267–274 (LELKLQDM). The TGS domain occupies 304-387 (QLEYFFTAGP…EDGDIIFFKF (84 aa)).

The protein belongs to the TRAFAC class OBG-HflX-like GTPase superfamily. OBG GTPase family. YchF/OLA1 subfamily. As to quaternary structure, monomer. It depends on Mg(2+) as a cofactor.

It localises to the cytoplasm. It is found in the nucleus. The protein localises to the nucleolus. Hydrolyzes ATP, and can also hydrolyze GTP with lower efficiency. Has lower affinity for GTP. The chain is Obg-like ATPase 1 from Gallus gallus (Chicken).